Here is a 275-residue protein sequence, read N- to C-terminus: Ribosomal RNA small subunit methyltransferase A (275 aa).

Residues Asn19, Leu21, Gly46, Glu71, Asp94, and Asn117 each coordinate S-adenosyl-L-methionine.

The protein belongs to the class I-like SAM-binding methyltransferase superfamily. rRNA adenine N(6)-methyltransferase family. RsmA subfamily.

It localises to the cytoplasm. It catalyses the reaction adenosine(1518)/adenosine(1519) in 16S rRNA + 4 S-adenosyl-L-methionine = N(6)-dimethyladenosine(1518)/N(6)-dimethyladenosine(1519) in 16S rRNA + 4 S-adenosyl-L-homocysteine + 4 H(+). Specifically dimethylates two adjacent adenosines (A1518 and A1519) in the loop of a conserved hairpin near the 3'-end of 16S rRNA in the 30S particle. May play a critical role in biogenesis of 30S subunits. The polypeptide is Ribosomal RNA small subunit methyltransferase A (Burkholderia multivorans (strain ATCC 17616 / 249)).